Here is a 304-residue protein sequence, read N- to C-terminus: Glutaminase (304 aa).

Residues serine 63, asparagine 114, glutamate 158, asparagine 165, tyrosine 189, tyrosine 240, and valine 258 each contribute to the substrate site.

The protein belongs to the glutaminase family. In terms of assembly, homotetramer.

It carries out the reaction L-glutamine + H2O = L-glutamate + NH4(+). This Shewanella oneidensis (strain ATCC 700550 / JCM 31522 / CIP 106686 / LMG 19005 / NCIMB 14063 / MR-1) protein is Glutaminase.